The following is a 95-amino-acid chain: Nucleoid-associated protein MMOB0740 (95 aa).

This sequence belongs to the YbaB/EbfC family. In terms of assembly, homodimer.

It is found in the cytoplasm. The protein localises to the nucleoid. Its function is as follows. Binds to DNA and alters its conformation. May be involved in regulation of gene expression, nucleoid organization and DNA protection. The polypeptide is Nucleoid-associated protein MMOB0740 (Mycoplasma mobile (strain ATCC 43663 / 163K / NCTC 11711) (Mesomycoplasma mobile)).